A 293-amino-acid polypeptide reads, in one-letter code: Histamine N-methyltransferase A (293 aa).

E28 lines the substrate pocket. 5 residues coordinate S-adenosyl-L-methionine: G60, E89, Q94, S120, and I142. N283 lines the substrate pocket.

Belongs to the class I-like SAM-binding methyltransferase superfamily. HNMT family. In terms of assembly, monomer.

It is found in the cytoplasm. The enzyme catalyses histamine + S-adenosyl-L-methionine = N(tau)-methylhistamine + S-adenosyl-L-homocysteine + H(+). Functionally, inactivates histamine by N-methylation. Plays an important role in degrading histamine and in regulating the airway response to histamine. This chain is Histamine N-methyltransferase A (hnmt-a), found in Xenopus laevis (African clawed frog).